Consider the following 1374-residue polypeptide: DNA-directed RNA polymerase subunit beta (1374 aa).

It belongs to the RNA polymerase beta chain family. In terms of assembly, the RNAP catalytic core consists of 2 alpha, 1 beta, 1 beta' and 1 omega subunit. When a sigma factor is associated with the core the holoenzyme is formed, which can initiate transcription.

The catalysed reaction is RNA(n) + a ribonucleoside 5'-triphosphate = RNA(n+1) + diphosphate. In terms of biological role, DNA-dependent RNA polymerase catalyzes the transcription of DNA into RNA using the four ribonucleoside triphosphates as substrates. This chain is DNA-directed RNA polymerase subunit beta, found in Rhodopseudomonas palustris (strain BisB5).